The primary structure comprises 603 residues: NADH-ubiquinone oxidoreductase chain 5 (603 aa).

16 helical membrane-spanning segments follow: residues 4–24 (FTTM…ATLI), 38–58 (TAIA…ICLG), 89–109 (FLPV…WYMA), 122–142 (LIFL…QLFI), 171–191 (AILY…WFLL), 211–233 (LPLL…HPWL), 241–261 (TPVS…FLLI), 273–293 (IQTL…ICAL), 301–320 (IVAF…IGIN), 325–347 (AFLH…GSII), 366–386 (MPLT…MPFL), 405–424 (NAWA…AYST), 457–477 (LMTG…PTSL), 488–508 (LAAL…NYLA), 537–557 (IPHL…DLTW), and 582–602 (GMIK…LLMI).

This sequence belongs to the complex I subunit 5 family. Core subunit of respiratory chain NADH dehydrogenase (Complex I) which is composed of 45 different subunits.

It localises to the mitochondrion inner membrane. The enzyme catalyses a ubiquinone + NADH + 5 H(+)(in) = a ubiquinol + NAD(+) + 4 H(+)(out). In terms of biological role, core subunit of the mitochondrial membrane respiratory chain NADH dehydrogenase (Complex I) which catalyzes electron transfer from NADH through the respiratory chain, using ubiquinone as an electron acceptor. Essential for the catalytic activity and assembly of complex I. This is NADH-ubiquinone oxidoreductase chain 5 (MT-ND5) from Pongo pygmaeus (Bornean orangutan).